Here is a 366-residue protein sequence, read N- to C-terminus: Methyltransferase phm5 (366 aa).

S-adenosyl-L-methionine is bound by residues 204–205 (GG), D230, 255–256 (SM), R273, and R274.

This sequence belongs to the class I-like SAM-binding methyltransferase superfamily. Cation-independent O-methyltransferase family.

It participates in secondary metabolite biosynthesis. Its function is as follows. Methyltransferase; part of the gene cluster that mediates the biosynthesis of the trans-fused decalin-containing tetramic acid phomasetin, the stereochemical opposite of the HIV-1 integrase inhibitor equisetin. The PKS module of phm1 together with the enoylreductase phm4 catalyze the formation of the polyketide unit which is then conjugated to L-serine by the condensation domain of the phm1 NRPS module. Activity of the Dieckmann cyclase domain (RED) of phm1 results in release of the Dieckmann product intermediate. The Diels-Alderase phm7 then uses the Dieckmann product of phm1 as substrate and catalyzes the Diels-Alder cycloaddition to form the decalin ring of N-desmethylphomasetin. N-desmethylphomasetin is further methylated to phomasetin by the methyltransferase phm5. This Pyrenochaetopsis sp protein is Methyltransferase phm5.